Consider the following 189-residue polypeptide: Probable nicotinate-nucleotide adenylyltransferase (189 aa).

Belongs to the NadD family.

It carries out the reaction nicotinate beta-D-ribonucleotide + ATP + H(+) = deamido-NAD(+) + diphosphate. Its pathway is cofactor biosynthesis; NAD(+) biosynthesis; deamido-NAD(+) from nicotinate D-ribonucleotide: step 1/1. Functionally, catalyzes the reversible adenylation of nicotinate mononucleotide (NaMN) to nicotinic acid adenine dinucleotide (NaAD). The polypeptide is Probable nicotinate-nucleotide adenylyltransferase (Hydrogenobaculum sp. (strain Y04AAS1)).